An 80-amino-acid polypeptide reads, in one-letter code: Defensin coprisin (80 aa).

The signal sequence occupies residues 1 to 20 (MAKLIAFALVASLCLSMVLC). Residues 21-37 (NPLPEEVQEEGLVRQKR) constitute a propeptide that is removed on maturation. Intrachain disulfides connect Cys40/Cys71, Cys57/Cys76, and Cys61/Cys78.

It belongs to the invertebrate defensin family. Type 1 subfamily.

The protein resides in the secreted. The protein localises to the target cell membrane. Potent broad-spectrum antibacterial peptide against both Gram-positive (B.subtilis, S.epidermidis, and S.aureus) and Gram-negative bacteria (E.coli, S.typhimurium, and P.aeruginosa). Is also active against all antibiotic-resistant bacterial strains tested. Induces apoptosis in C.albicans, but does not disrupt the fungal plasma membrane at all. Acts by permeabilizing the bacterial cell membrane, but not human membranes. Also shows potent anti-inflammatory activities, since it reduces both LPS-induced nitric oxide release and pro-inflammatory cytokine production. Anti-inflammatory activities are initiated by suppressing the binding of LPS to toll-like receptor 4 (TLR4), and subsequently inhibiting the phosphorylation of p38 mitogen-activated protein kinase (MAPK) and nuclear translocation of NF-kB (TNFRSF11A). Does not show hemolytic activity against human erythrocytes. The sequence is that of Defensin coprisin from Copris tripartitus (Dung beetle).